Reading from the N-terminus, the 411-residue chain is Elongation factor Tu, apicoplast (411 aa).

One can recognise a tr-type G domain in the interval 10-214; it reads KPHVNIGTIG…TVDSYIEKPE (205 aa). Positions 19–26 are G1; sequence GHVDHGKT. Residue 19-26 coordinates GTP; that stretch reads GHVDHGKT. Thr26 is a Mg(2+) binding site. The segment at 61-65 is G2; that stretch reads GITIN. The segment at 82-85 is G3; it reads DCPG. GTP is bound by residues 82–86 and 137–140; these read DCPGH and NKED. Positions 137–140 are G4; that stretch reads NKED. The tract at residues 175–177 is G5; that stretch reads SAL.

The protein belongs to the TRAFAC class translation factor GTPase superfamily. Classic translation factor GTPase family. EF-Tu/EF-1A subfamily.

It is found in the plastid. Its subcellular location is the apicoplast. The catalysed reaction is GTP + H2O = GDP + phosphate + H(+). Functionally, GTP hydrolase that promotes the GTP-dependent binding of aminoacyl-tRNA to the A-site of ribosomes during protein biosynthesis. The polypeptide is Elongation factor Tu, apicoplast (tufA) (Theileria parva (East coast fever infection agent)).